Here is a 282-residue protein sequence, read N- to C-terminus: Protoheme IX farnesyltransferase (282 aa).

The next 9 helical transmembrane spans lie at 9–29, 39–59, 79–99, 102–122, 139–159, 165–185, 210–230, 231–251, and 261–281; these read LAKPGIIFGNLITLTGGFLLA, LPLFVYVMIGVALMIAAGCVF, LVTGDISVIQATIYGTILLIL, LVLYYLVNLLTLWIIIIGFIV, VLGGISGAIPPVAGYTAVVNI, LALFLILFFWQIPHSYAIAML, IMLFYLALFVVSCALPAVLGS, ADLFSFIVCMLVALFWMYKSI, and VFAKTVFKFSIIVITAICLTM.

This sequence belongs to the UbiA prenyltransferase family. Protoheme IX farnesyltransferase subfamily.

It is found in the cell inner membrane. It carries out the reaction heme b + (2E,6E)-farnesyl diphosphate + H2O = Fe(II)-heme o + diphosphate. The protein operates within porphyrin-containing compound metabolism; heme O biosynthesis; heme O from protoheme: step 1/1. Functionally, converts heme B (protoheme IX) to heme O by substitution of the vinyl group on carbon 2 of heme B porphyrin ring with a hydroxyethyl farnesyl side group. This Francisella tularensis subsp. novicida (strain U112) protein is Protoheme IX farnesyltransferase.